The sequence spans 385 residues: Lipid-A-disaccharide synthase 2 (385 aa).

Belongs to the LpxB family.

The enzyme catalyses a lipid X + a UDP-2-N,3-O-bis[(3R)-3-hydroxyacyl]-alpha-D-glucosamine = a lipid A disaccharide + UDP + H(+). Its pathway is bacterial outer membrane biogenesis; LPS lipid A biosynthesis. In terms of biological role, condensation of UDP-2,3-diacylglucosamine and 2,3-diacylglucosamine-1-phosphate to form lipid A disaccharide, a precursor of lipid A, a phosphorylated glycolipid that anchors the lipopolysaccharide to the outer membrane of the cell. The polypeptide is Lipid-A-disaccharide synthase 2 (Legionella pneumophila (strain Paris)).